Here is an 859-residue protein sequence, read N- to C-terminus: MYILVWKKGQQIKTFHTLDEAAQFKAASNIDEAQMFSVTVAPAISASGGSNEATNLRRLMYLSKSTNPEECNPQFLAEMARVATIRNREIGVSGFLMYSSPFSFQVIEGTDEDLDFLFAKISADPRHERCIVLANGPCTGRMYGDWHMKDSHMDSITTHPAMKTILYQIARSFSSMWSYLPKSAGNMLLLGKDPAAQPPEPMSVVVTFIYLVEFGSILSNPNLTDQAAEVLSTFVDVCVKNVEGSGGNIAKFITGICMAYWPINRTEEALTAIQQISEDLAQLRSQQAPGSAVSLMYSQAGVHYGRPMLCNAGRRKSDFTLLGDCINTTSRIATLAKKFKTPLLFSQEVRCLLRDEMREEIVGAGMHQVKGRDKPVVVYQFPGPELDVEMVRQKIEQFTPGRFRCQMPVVEYEGLPNSQRPPIFDDTPKANRRPRTPGYGGRQRSDSQVDRPIMIAKLAGPSVSATGDTTLTTLTYISQATRPMSRQDLSAIMRTATRRNAQQSITGTLLHVNGLFVQTLEGPKDAVANLYLRVRQDPRQTDVTTVHMAPLQERVYPSEWTLTSATAEMLATFPPLQDVLAQLAKSFTSLETYVPSTVVRHLTAGNNPRNLMPVSCGVVMLATDICSFTSLTEKSSLTEVWMICNTFIDACTSAICQDGREVIKLIGDCVTAYSPGNNADSAVAAAQELFTFCRQLREAFVDVLDVRGCVSCGVGLEYGQVVMAQCGSMGLTEYVVAGAVSARVMEVEAITREVGYAIVVTEPVADRLSPQLRDHGIVPTPQAIEGLPCYGIAGEEFELDVDSIKRGIKALHAARSGEKPLTEPEAAKPDFRVSPGRVRHGDSGRRSNSAQGKRSIQVR.

A BLUF 1 domain is found at 56-149 (LRRLMYLSKS…GRMYGDWHMK (94 aa)). One can recognise a Guanylate cyclase 1 domain in the interval 205 to 333 (VVTFIYLVEF…DCINTTSRIA (129 aa)). Residues 414–449 (GLPNSQRPPIFDDTPKANRRPRTPGYGGRQRSDSQV) are disordered. The BLUF 2 domain maps to 471–563 (LTTLTYISQA…RVYPSEWTLT (93 aa)). The 130-residue stretch at 619-748 (VMLATDICSF…AVSARVMEVE (130 aa)) folds into the Guanylate cyclase 2 domain. Positions 813–859 (AARSGEKPLTEPEAAKPDFRVSPGRVRHGDSGRRSNSAQGKRSIQVR) are disordered. Residues 815 to 831 (RSGEKPLTEPEAAKPDF) are compositionally biased toward basic and acidic residues. A compositionally biased stretch (polar residues) spans 846–859 (RSNSAQGKRSIQVR).

This sequence belongs to the adenylyl cyclase class-4/guanylyl cyclase family. As to quaternary structure, heterotetramer of two alpha and two beta subunits.

It localises to the cell projection. It is found in the cilium. Its subcellular location is the flagellum. The protein is Photoactivated adenylate cyclase subunit beta-like protein FB of Euglena gracilis.